Here is a 25-residue protein sequence, read N- to C-terminus: Histone H1.1 (25 aa).

The H15 domain occupies 1 to 25 (MVSEAIAALKEREGSSEFAIGKKKE). A disordered region spans residues 1–25 (MVSEAIAALKEREGSSEFAIGKKKE). The segment covering 9-25 (LKEREGSSEFAIGKKKE) has biased composition (basic and acidic residues).

It localises to the nucleus. The protein resides in the chromosome. In terms of biological role, histones H1 are necessary for the condensation of nucleosome chains into higher-order structures. The sequence is that of Histone H1.1 from Triticum aestivum (Wheat).